The primary structure comprises 381 residues: Succinyl-diaminopimelate desuccinylase (381 aa).

Zn(2+) is bound at residue His72. Asp74 is an active-site residue. Asp105 provides a ligand contact to Zn(2+). Glu139 acts as the Proton acceptor in catalysis. Zn(2+)-binding residues include Glu140, Glu168, and His354.

The protein belongs to the peptidase M20A family. DapE subfamily. As to quaternary structure, homodimer. It depends on Zn(2+) as a cofactor. Requires Co(2+) as cofactor.

It catalyses the reaction N-succinyl-(2S,6S)-2,6-diaminopimelate + H2O = (2S,6S)-2,6-diaminopimelate + succinate. It participates in amino-acid biosynthesis; L-lysine biosynthesis via DAP pathway; LL-2,6-diaminopimelate from (S)-tetrahydrodipicolinate (succinylase route): step 3/3. In terms of biological role, catalyzes the hydrolysis of N-succinyl-L,L-diaminopimelic acid (SDAP), forming succinate and LL-2,6-diaminopimelate (DAP), an intermediate involved in the bacterial biosynthesis of lysine and meso-diaminopimelic acid, an essential component of bacterial cell walls. This Shewanella sp. (strain MR-7) protein is Succinyl-diaminopimelate desuccinylase.